Here is a 463-residue protein sequence, read N- to C-terminus: Sodium-coupled neutral amino acid transporter 7 (463 aa).

Phosphoserine is present on Ser-28. Helical transmembrane passes span 56-76 (AIFI…PAAF), 82-102 (VAAG…GLVI), 130-150 (LCEV…LIII), 179-199 (FTIS…REIG), 206-226 (FLSV…YIWP), 240-260 (ASWI…QCHV), 283-303 (AAMV…FLTF), 320-340 (MAVA…YPIL), 372-392 (VLQT…IPDI), 396-416 (ISVI…LCLI), and 429-449 (ASWW…AFIF).

It belongs to the amino acid/polyamine transporter 2 family. In terms of assembly, interacts with the mTORC1 complex; this interaction mediates the recruitment of mTORC1 to the lysosome and its subsequent activation.

Its subcellular location is the lysosome membrane. The protein resides in the cell projection. It is found in the axon. It carries out the reaction L-asparagine(in) + Na(+)(in) = L-asparagine(out) + Na(+)(out). The catalysed reaction is L-glutamine(in) + Na(+)(in) = L-glutamine(out) + Na(+)(out). Its function is as follows. Symporter that selectively cotransports sodium ions and amino acids, such as L-glutamine and L-asparagine from the lysosome into the cytoplasm and may participates in mTORC1 activation. The transport activity requires an acidic lysosomal lumen. The chain is Sodium-coupled neutral amino acid transporter 7 from Bos taurus (Bovine).